Consider the following 139-residue polypeptide: Classical arabinogalactan protein 3 (139 aa).

The N-terminal stretch at Met-1–Ala-21 is a signal peptide. Gln-22 carries the pyrrolidone carboxylic acid modification. Positions Thr-30–Ala-115 are disordered. Composition is skewed to pro residues over residues Ala-46–Thr-77 and Pro-97–Ala-107. A lipid anchor (GPI-anchor amidated aspartate) is attached at Asp-116. Positions Ser-117 to Ala-139 are cleaved as a propeptide — removed in mature form.

It belongs to the classical AGP family. O-glycosylated on the hydroxyproline residues. As to expression, expressed at a low level in roots.

It localises to the cell membrane. Proteoglycan that seems to be implicated in diverse developmental roles such as differentiation, cell-cell recognition, embryogenesis and programmed cell death. This Arabidopsis thaliana (Mouse-ear cress) protein is Classical arabinogalactan protein 3 (AGP3).